Reading from the N-terminus, the 31-residue chain is Potassium channel toxin alpha-KTx 5.1 (31 aa).

3 cysteine pairs are disulfide-bonded: cysteine 3/cysteine 21, cysteine 8/cysteine 26, and cysteine 12/cysteine 28. The interval arginine 6–glutamine 9 is [R/K]XCQ motif. The residue at position 31 (histidine 31) is a Histidine amide.

Belongs to the short scorpion toxin superfamily. Potassium channel inhibitor family. Alpha-KTx 05 subfamily. In terms of processing, two disulfide bonds are the minimal requirement needed to produce a nativelike and bio-active conformation in this toxin. The third disulfide provides an additional contribution to structure stabilization and can modulate biological potency depending on its position and the structural regions involved in biological activity. Expressed by the venom gland.

It localises to the secreted. Blocker for the small conductance calcium-activated potassium channels. Shows the best affinity for KCa2.2/KCNN2 (Kd=0.2 nM), followed by KCa2.3/KCNN3 (Kd=1.1 nM) and KCa2.1/KCNN1 (Kd=325 nM). The sequence is that of Potassium channel toxin alpha-KTx 5.1 from Leiurus hebraeus (Hebrew deathstalker scorpion).